Consider the following 217-residue polypeptide: Flagellin B1 (217 aa).

The propeptide occupies 1 to 12; that stretch reads MKVFEFLKGKRG.

Belongs to the archaeal flagellin family.

It localises to the archaeal flagellum. Functionally, flagellin is the subunit protein which polymerizes to form the filaments of archaeal flagella. The protein is Flagellin B1 (flaB1) of Methanocaldococcus jannaschii (strain ATCC 43067 / DSM 2661 / JAL-1 / JCM 10045 / NBRC 100440) (Methanococcus jannaschii).